The chain runs to 168 residues: NADH-quinone oxidoreductase subunit B (168 aa).

The [4Fe-4S] cluster site is built by Cys-37, Cys-38, Cys-103, and Cys-132.

Belongs to the complex I 20 kDa subunit family. In terms of assembly, NDH-1 is composed of 14 different subunits. Subunits NuoB, C, D, E, F, and G constitute the peripheral sector of the complex. The cofactor is [4Fe-4S] cluster.

The protein resides in the cell inner membrane. The catalysed reaction is a quinone + NADH + 5 H(+)(in) = a quinol + NAD(+) + 4 H(+)(out). NDH-1 shuttles electrons from NADH, via FMN and iron-sulfur (Fe-S) centers, to quinones in the respiratory chain. The immediate electron acceptor for the enzyme in this species is believed to be ubiquinone. Couples the redox reaction to proton translocation (for every two electrons transferred, four hydrogen ions are translocated across the cytoplasmic membrane), and thus conserves the redox energy in a proton gradient. The polypeptide is NADH-quinone oxidoreductase subunit B (Campylobacter fetus subsp. fetus (strain 82-40)).